Consider the following 383-residue polypeptide: E3 ubiquitin-protein ligase SPL2 (383 aa).

Over 1–14 (MSSPERALLNLLTD) the chain is Cytoplasmic. Residues 15 to 35 (IALSFDGAILGLTLAVSAVGS) form a helical membrane-spanning segment. Topologically, residues 36–269 (ALKYASTNAA…MIEDLMEQTN (234 aa)) are chloroplast intermembrane. A helical membrane pass occupies residues 270 to 290 (FIFLGSVILGIVSVGILSYAA). Topologically, residues 291–383 (VRTWNKWKQW…IRGSMRVYYS (93 aa)) are cytoplasmic. Residues 331 to 370 (CVICVSRRRVPAFIPCGHVVCCRRCASTVERELNPKCPVC) form an RING-type zinc finger.

The protein localises to the plastid. It is found in the chloroplast outer membrane. The catalysed reaction is S-ubiquitinyl-[E2 ubiquitin-conjugating enzyme]-L-cysteine + [acceptor protein]-L-lysine = [E2 ubiquitin-conjugating enzyme]-L-cysteine + N(6)-ubiquitinyl-[acceptor protein]-L-lysine.. The protein operates within protein modification; protein ubiquitination. In terms of biological role, possesses E3 ubiquitin-protein ligase activity. The sequence is that of E3 ubiquitin-protein ligase SPL2 from Arabidopsis thaliana (Mouse-ear cress).